Here is a 278-residue protein sequence, read N- to C-terminus: 3-methyl-2-oxobutanoate hydroxymethyltransferase (278 aa).

2 residues coordinate Mg(2+): aspartate 43 and aspartate 82. 3-methyl-2-oxobutanoate-binding positions include 43–44 (DS), aspartate 82, and lysine 112. Mg(2+) is bound at residue glutamate 114. Residue glutamate 181 is the Proton acceptor of the active site.

It belongs to the PanB family. As to quaternary structure, homodecamer; pentamer of dimers. Requires Mg(2+) as cofactor.

The protein localises to the cytoplasm. It carries out the reaction 3-methyl-2-oxobutanoate + (6R)-5,10-methylene-5,6,7,8-tetrahydrofolate + H2O = 2-dehydropantoate + (6S)-5,6,7,8-tetrahydrofolate. Its pathway is cofactor biosynthesis; (R)-pantothenate biosynthesis; (R)-pantoate from 3-methyl-2-oxobutanoate: step 1/2. Functionally, catalyzes the reversible reaction in which hydroxymethyl group from 5,10-methylenetetrahydrofolate is transferred onto alpha-ketoisovalerate to form ketopantoate. The sequence is that of 3-methyl-2-oxobutanoate hydroxymethyltransferase from Desulfitobacterium hafniense (strain DSM 10664 / DCB-2).